The primary structure comprises 345 residues: Anthranilate phosphoribosyltransferase (345 aa).

5-phospho-alpha-D-ribose 1-diphosphate is bound by residues G79, 82–83 (GD), T87, 89–92 (NVST), 106–114 (KHGNRAVSG), and S118. Anthranilate is bound at residue G79. S91 contributes to the Mg(2+) binding site. N109 is a binding site for anthranilate. R164 lines the anthranilate pocket. D223 and E224 together coordinate Mg(2+).

This sequence belongs to the anthranilate phosphoribosyltransferase family. Homodimer. Mg(2+) serves as cofactor.

It catalyses the reaction N-(5-phospho-beta-D-ribosyl)anthranilate + diphosphate = 5-phospho-alpha-D-ribose 1-diphosphate + anthranilate. The protein operates within amino-acid biosynthesis; L-tryptophan biosynthesis; L-tryptophan from chorismate: step 2/5. In terms of biological role, catalyzes the transfer of the phosphoribosyl group of 5-phosphorylribose-1-pyrophosphate (PRPP) to anthranilate to yield N-(5'-phosphoribosyl)-anthranilate (PRA). In Saccharolobus islandicus (strain M.16.27) (Sulfolobus islandicus), this protein is Anthranilate phosphoribosyltransferase.